Reading from the N-terminus, the 190-residue chain is MFLDVVRKHGNGRVAYCYARALLDIVVDSADSICEEIKLVRAALTADGEVRAFFANPVTPKENKIAVLQALGKSCKLSRTLVGFVCVVVKDGKFGLLSDMFEEFFVLLMHARGQFALEITTASPVSAAEEKRILSIVKSEYGEPATVTKRVDPAILGGFIAKADSLVIDASFAGHLRELERVSRSVVCGV.

It belongs to the ATPase delta chain family. In terms of assembly, F-type ATPases have 2 components, F(1) - the catalytic core - and F(0) - the membrane proton channel. F(1) has five subunits: alpha(3), beta(3), gamma(1), delta(1), epsilon(1). F(0) has three main subunits: a(1), b(2) and c(10-14). The alpha and beta chains form an alternating ring which encloses part of the gamma chain. F(1) is attached to F(0) by a central stalk formed by the gamma and epsilon chains, while a peripheral stalk is formed by the delta and b chains.

It is found in the cell inner membrane. Its function is as follows. F(1)F(0) ATP synthase produces ATP from ADP in the presence of a proton or sodium gradient. F-type ATPases consist of two structural domains, F(1) containing the extramembraneous catalytic core and F(0) containing the membrane proton channel, linked together by a central stalk and a peripheral stalk. During catalysis, ATP synthesis in the catalytic domain of F(1) is coupled via a rotary mechanism of the central stalk subunits to proton translocation. Functionally, this protein is part of the stalk that links CF(0) to CF(1). It either transmits conformational changes from CF(0) to CF(1) or is implicated in proton conduction. This Anaplasma marginale (strain Florida) protein is ATP synthase subunit delta.